We begin with the raw amino-acid sequence, 432 residues long: Glutamyl-tRNA reductase (432 aa).

Substrate-binding positions include 55–58 (TCNR), serine 114, 119–121 (ETQ), and glutamine 125. Cysteine 56 functions as the Nucleophile in the catalytic mechanism. 194–199 (GAGEMI) is a binding site for NADP(+).

It belongs to the glutamyl-tRNA reductase family. In terms of assembly, homodimer.

It catalyses the reaction (S)-4-amino-5-oxopentanoate + tRNA(Glu) + NADP(+) = L-glutamyl-tRNA(Glu) + NADPH + H(+). It functions in the pathway porphyrin-containing compound metabolism; protoporphyrin-IX biosynthesis; 5-aminolevulinate from L-glutamyl-tRNA(Glu): step 1/2. Catalyzes the NADPH-dependent reduction of glutamyl-tRNA(Glu) to glutamate 1-semialdehyde (GSA). The sequence is that of Glutamyl-tRNA reductase from Burkholderia thailandensis (strain ATCC 700388 / DSM 13276 / CCUG 48851 / CIP 106301 / E264).